The primary structure comprises 144 residues: NADH-ubiquinone oxidoreductase chain 6 (144 aa).

Helical transmembrane passes span 1–21 (MLGS…INVD), 26–46 (SFFL…FLHV), 47–67 (WFSY…LVYF), 76–96 (VVTP…YPFF), and 108–128 (FYFS…IFFM).

This sequence belongs to the complex I subunit 6 family.

It localises to the mitochondrion membrane. It catalyses the reaction a ubiquinone + NADH + 5 H(+)(in) = a ubiquinol + NAD(+) + 4 H(+)(out). Functionally, core subunit of the mitochondrial membrane respiratory chain NADH dehydrogenase (Complex I) that is believed to belong to the minimal assembly required for catalysis. Complex I functions in the transfer of electrons from NADH to the respiratory chain. The immediate electron acceptor for the enzyme is believed to be ubiquinone. In Ascaris suum (Pig roundworm), this protein is NADH-ubiquinone oxidoreductase chain 6 (ND6).